We begin with the raw amino-acid sequence, 302 residues long: Glutaminase (302 aa).

Residues S61, N111, E155, N162, Y186, Y238, and V256 each coordinate substrate.

Belongs to the glutaminase family. Homotetramer.

It carries out the reaction L-glutamine + H2O = L-glutamate + NH4(+). This is Glutaminase from Pseudomonas putida (strain ATCC 700007 / DSM 6899 / JCM 31910 / BCRC 17059 / LMG 24140 / F1).